A 726-amino-acid chain; its full sequence is MILRTPQPKRLRSDAGESPFPTGATGSGNQLIIYEDSPLPAPAPLQTSHDHSADQHLCTYQCRQMVKADVLDALSTAEKQVEESKTKLQTLNANFTEADAERKHFRDKFLYSEQELAAAKAREKMLQEQLLMEINNSQERYTKELQSCHELEVKLQNEMNLRKKAESSAATAEEKAKLLEDKLTQLSGSVDREKKRLNNDIAQLGKEAKLSVARIGADLERMQCRAQNAETESNLLRSQLEHLKLIFDECLQEKTEVDKKLSSFTSEAASSSDNSVLVKHLQEELKRYEAEVREARKLKSRHLDAELLNVNLLEEQSRRERAESELSKFHDLQLSMEKLENELSSWKSLLNDIPGVSCPDDIVMRFSVLQNEVVQSTMKIGEASTRIKQLEETLEAIQLGRQNAVSEAALAKEKSEALKTDVKRIEVMLTLVTEEKEQLKAVVNELRKSNSEGSVSGAADGALIQGFESSLAKKENYIKDLEQDLNQLKDVNNRQRTEIELLNEKLVDEARRNKSLERDSDRLRSEISLLESKLGHGDYSAANTRVLRMVNTLGVENEAKQTIEALQAELQKTKERLQAVEELKSQSGDAGKLVDSHITGKIAQLKEQNATLEKREERYKTVFADRISVFRRACCELFGYKIVMDEHQRPNGIPVTRFTLQSIYAQSDDEKLEFEYESGNTSILNNEYASQGDIAKQIEIFIRKFNSIPAFTANLTMESFNRRTLY.

The tract at residues 1–30 (MILRTPQPKRLRSDAGESPFPTGATGSGNQ) is disordered. 2 coiled-coil regions span residues 68–246 (ADVL…LKLI) and 272–625 (SDNS…VFAD).

This sequence belongs to the MAD1 family. In terms of assembly, homodimer. Part of the mitotic checkpoint complex (MCC). Interacts with MAD2 and NUA.

The protein localises to the nucleus envelope. Functionally, required for the execution of the mitotic checkpoint which monitors the process of kinetochore-spindle attachment and delays the onset of anaphase when this process is not complete. It inhibits the activity of the anaphase promoting complex by sequestering CDC20 until all chromosomes are aligned at the metaphase plate. Required for anchoring MAD2 to the nuclear envelope. In Arabidopsis thaliana (Mouse-ear cress), this protein is Mitotic spindle checkpoint protein MAD1.